A 53-amino-acid polypeptide reads, in one-letter code: Conotoxin Vc5.3 (53 aa).

Residues 1–15 (VILLLLTASAPSVDA) form the signal peptide. Positions 16-41 (RPKTEDVPLSSFRDNTKSTLQRLLKR) are excised as a propeptide.

This sequence belongs to the conotoxin T superfamily. Contains 2 disulfide bonds that can be either 'C1-C3, C2-C4' or 'C1-C4, C2-C3', since these disulfide connectivities have been observed for conotoxins with cysteine framework V (for examples, see AC P0DQQ7 and AC P81755). In terms of tissue distribution, expressed by the venom duct.

It is found in the secreted. This Conus victoriae (Queen Victoria cone) protein is Conotoxin Vc5.3.